Here is a 214-residue protein sequence, read N- to C-terminus: Large ribosomal subunit protein uL29m (214 aa).

Belongs to the universal ribosomal protein uL29 family. As to quaternary structure, component of the mitochondrial large ribosomal subunit. Mature mitochondrial ribosomes consist of a small (37S) and a large (54S) subunit. The 37S subunit contains at least 33 different proteins and 1 molecule of RNA (15S). The 54S subunit contains at least 45 different proteins and 1 molecule of RNA (21S).

The protein localises to the mitochondrion. This Aspergillus terreus (strain NIH 2624 / FGSC A1156) protein is Large ribosomal subunit protein uL29m (mrpl4).